The chain runs to 1559 residues: Bile pigment transporter 1 (1559 aa).

The Vacuolar segment spans residues 1–29 (MSSLEVVDGCPYGYRPYPDSGTNALNPCF). A helical membrane pass occupies residues 30–50 (ISVISAWQAVFFLLIGSYQLW). Topologically, residues 51–84 (KLYKNNKVPPRFKNFPTLPSKINSRHLTHLTNVC) are cytoplasmic. Residues 85-105 (FQSTLIICELALVSQSSDRVY) traverse the membrane as a helical segment. The Vacuolar portion of the chain corresponds to 106 to 110 (PFILK). The helical transmembrane segment at 111–127 (KALYLNLLFNLGISLPT) threads the bilayer. Topologically, residues 128 to 139 (QYLAYFKSTFSM) are cytoplasmic. The helical transmembrane segment at 140-160 (GNQLFYYMFQILLQLFLILQR) threads the bilayer. Topologically, residues 161 to 178 (YYHGSSNERLTVISGQTA) are vacuolar. Residues 179-199 (MILEVLLLFNSVAIFIYDLCI) form a helical membrane-spanning segment. Topologically, residues 200–283 (FEPINELSEY…WLNRNSLWRA (84 aa)) are cytoplasmic. Residues 284 to 304 (IWKSFGRTISVAMLYETTSDL) traverse the membrane as a helical segment. Residues 292–578 (ISVAMLYETT…VPSMINTIIE (287 aa)) enclose the ABC transmembrane type-1 1 domain. The Vacuolar portion of the chain corresponds to 305 to 333 (LSVVQPQFLRIFIDGLNPETSSKYPPLNG). A helical membrane pass occupies residues 334–354 (VFIALTLFVISVVSVFLTNQF). At 355–410 (YIGIFEAGLGIRGSLASLVYQKSLRLTLAERNEKSTGDILNLMSVDVLRIQRFFEN) the chain is on the cytoplasmic side. Residues 411 to 431 (AQTIIGAPIQIIVVLTSLYWL) form a helical membrane-spanning segment. Residues 432-434 (LGK) lie on the Vacuolar side of the membrane. Residues 435-455 (AVIGGLVTMAIMMPINAFLSR) traverse the membrane as a helical segment. Topologically, residues 456 to 518 (KVKKLSKTQM…NFRKIGIVSN (63 aa)) are cytoplasmic. Residues 519–539 (LIYFAWNCVPLMVTCSTFGLF) form a helical membrane-spanning segment. Residues 540–560 (SLFSDSPLSPAIVFPSLSLFN) are Vacuolar-facing. The helical transmembrane segment at 561–581 (ILNSAIYSVPSMINTIIETSV) threads the bilayer. Topologically, residues 582–972 (SMERLKSFLL…VKTKIYLAYI (391 aa)) are cytoplasmic. The 233-residue stretch at 639-871 (LRTDEESIIG…KNNTSKLKKL (233 aa)) folds into the ABC transporter 1 domain. Serine 645 carries the post-translational modification Phosphoserine. 672–679 (GRVGAGKS) is a binding site for ATP. Residues 877–899 (SPIDNGNESDVQTEHRSESEVDE) form a disordered region. Phosphoserine is present on serine 885. Threonine 889 is subject to Phosphothreonine. Phosphoserine occurs at positions 893 and 895. At threonine 916 the chain carries Phosphothreonine. Residues serine 927 and serine 931 each carry the phosphoserine modification. Phosphothreonine is present on threonine 934. Residues 973–993 (KACGVLGVVLFFLFMILTRVF) form a helical membrane-spanning segment. Residues 980–1265 (VVLFFLFMIL…IVRTTVTIET (286 aa)) enclose the ABC transmembrane type-1 2 domain. The Vacuolar segment spans residues 994-1030 (DLAENFWLKYWSESNEKNGSNERVWMFVGVYSLIGVA). Asparagine 1011 carries an N-linked (GlcNAc...) asparagine glycan. Residues 1031 to 1052 (SAAFNNLRSIMMLLYCSIRGSK) traverse the membrane as a helical segment. Topologically, residues 1053 to 1095 (KLHESMAKSVIRSPMTFFETTPVGRIINRFSSDMDAVDSNLQY) are cytoplasmic. Residues 1096–1116 (IFSFFFKSILTYLVTVILVGY) traverse the membrane as a helical segment. Asparagine 1117 is a topological domain (vacuolar). A helical transmembrane segment spans residues 1118–1138 (MPWFLVFNMFLVVIYIYYQTF). Residues 1139–1209 (YIVLSRELKR…STNRWLSVRL (71 aa)) lie on the Cytoplasmic side of the membrane. A helical transmembrane segment spans residues 1210–1230 (QTIGATIVLATAILALATMNT). Over 1231 to 1235 (KRQLS) the chain is Vacuolar. Residues 1236-1256 (SGMVGLLMSYSLEVTGSLTWI) traverse the membrane as a helical segment. The Cytoplasmic segment spans residues 1257–1559 (VRTTVTIETN…SLCEKGGYLK (303 aa)). In terms of domain architecture, ABC transporter 2 spans 1302–1553 (IEFKNYSTKY…KTSIFYSLCE (252 aa)). 1336–1343 (GRTGAGKS) is an ATP binding site. The segment covering 1420 to 1433 (HLEKMLHSKPRGDD) has biased composition (basic and acidic residues). The disordered stretch occupies residues 1420–1439 (HLEKMLHSKPRGDDSNEEDG).

It belongs to the ABC transporter superfamily.

Its subcellular location is the vacuole membrane. Functionally, cooperates for the ATP-dependent vacuolar transport of bilirubin and glutathione conjugates. The protein is Bile pigment transporter 1 (BPT1) of Saccharomyces cerevisiae (strain ATCC 204508 / S288c) (Baker's yeast).